The chain runs to 486 residues: Ribosomal protein uS12 methylthiotransferase RimO (486 aa).

The MTTase N-terminal domain occupies 9–125 (RSVALVTLGC…LSSHLEAILH (117 aa)). The [4Fe-4S] cluster site is built by cysteine 18, cysteine 54, cysteine 88, cysteine 191, cysteine 195, and cysteine 198. Positions 177 to 408 (LGSGPWAPVK…RLVEELVTQR (232 aa)) constitute a Radical SAM core domain. The 73-residue stretch at 410-482 (EERLGEVVEV…GADLLAEPLV (73 aa)) folds into the TRAM domain.

The protein belongs to the methylthiotransferase family. RimO subfamily. [4Fe-4S] cluster serves as cofactor.

It localises to the cytoplasm. The enzyme catalyses L-aspartate(89)-[ribosomal protein uS12]-hydrogen + (sulfur carrier)-SH + AH2 + 2 S-adenosyl-L-methionine = 3-methylsulfanyl-L-aspartate(89)-[ribosomal protein uS12]-hydrogen + (sulfur carrier)-H + 5'-deoxyadenosine + L-methionine + A + S-adenosyl-L-homocysteine + 2 H(+). In terms of biological role, catalyzes the methylthiolation of an aspartic acid residue of ribosomal protein uS12. The polypeptide is Ribosomal protein uS12 methylthiotransferase RimO (Kineococcus radiotolerans (strain ATCC BAA-149 / DSM 14245 / SRS30216)).